A 61-amino-acid chain; its full sequence is DGYIRRRDGCKVSCLFGNEGCDKECKAYGGSYGYCWTWGLACWCEGLPDDKTWKSETNTCG.

An LCN-type CS-alpha/beta domain is found at 1–61; sequence DGYIRRRDGC…TWKSETNTCG (61 aa). 4 cysteine pairs are disulfide-bonded: Cys10–Cys60, Cys14–Cys35, Cys21–Cys42, and Cys25–Cys44.

The protein belongs to the long (4 C-C) scorpion toxin superfamily. Sodium channel inhibitor family. Beta subfamily. As to expression, expressed by the venom gland.

It is found in the secreted. Its function is as follows. Depressant insect beta-toxins cause a transient contraction paralysis followed by a slow flaccid paralysis. They bind voltage-independently at site-4 of sodium channels (Nav) and shift the voltage of activation toward more negative potentials thereby affecting sodium channel activation and promoting spontaneous and repetitive firing. This toxin is active only on insects. The chain is Beta-insect depressant toxin BaIT2 from Buthacus arenicola (North African scorpion).